The following is a 499-amino-acid chain: GTPase Der (499 aa).

2 consecutive EngA-type G domains span residues 3–166 (PVVA…MDEV) and 211–384 (IKLA…DCST). Residues 9–16 (GRPNVGKS), 56–60 (DTGGI), 118–121 (NKTD), 217–224 (GRPNVGKS), 264–268 (DTAGV), and 329–332 (NKWD) contribute to the GTP site. Residues 385–469 (RRVNTSMLTR…PIRIQFKEGD (85 aa)) form the KH-like domain.

It belongs to the TRAFAC class TrmE-Era-EngA-EngB-Septin-like GTPase superfamily. EngA (Der) GTPase family. In terms of assembly, associates with the 50S ribosomal subunit.

GTPase that plays an essential role in the late steps of ribosome biogenesis. This is GTPase Der from Erwinia tasmaniensis (strain DSM 17950 / CFBP 7177 / CIP 109463 / NCPPB 4357 / Et1/99).